We begin with the raw amino-acid sequence, 201 residues long: Protease (201 aa).

Active-site residues include His56, Asp73, and Cys121.

The protein belongs to the peptidase C5 family. Interacts with protease cofactor pVI-C; this interaction is necessary for protease activation.

The protein resides in the virion. The protein localises to the host nucleus. The enzyme catalyses Cleaves proteins of the adenovirus and its host cell at two consensus sites: -Yaa-Xaa-Gly-Gly-|-Xaa- and -Yaa-Xaa-Gly-Xaa-|-Gly- (in which Yaa is Met, Ile or Leu, and Xaa is any amino acid).. Requires DNA and protease cofactor for maximal activation. Inside nascent virions, becomes partially activated by binding to the viral DNA, allowing it to cleave the cofactor that binds to the protease and fully activates it. Actin, like the viral protease cofactor, seems to act as a cofactor in the cleavage of cytokeratin 18 and of actin itself. Cleaves viral precursor proteins (pTP, pIIIa, pVI, pVII, pVIII, and pX) inside newly assembled particles giving rise to mature virions. Protease complexed to its cofactor slides along the viral DNA to specifically locate and cleave the viral precursors. Mature virions have a weakened organization compared to the unmature virions, thereby facilitating subsequent uncoating. Without maturation, the particle lacks infectivity and is unable to uncoat. Late in adenovirus infection, in the cytoplasm, may participate in the cytoskeleton destruction. Cleaves host cell cytoskeletal keratins K7 and K18. The chain is Protease from Homo sapiens (Human).